Reading from the N-terminus, the 1171-residue chain is DNA polymerase catalytic subunit (1171 aa).

Disordered stretches follow at residues 647–687, 704–735, and 1149–1171; these read GTPA…PFRT, PGGG…EPAP, and VEEE…DSSR. Residues 649 to 662 are compositionally biased toward pro residues; the sequence is PARPPETPARPPET. Composition is skewed to low complexity over residues 663–674 and 709–725; these read PAAGPSGAAHAG and VSSA…PSET. Residues 1149-1158 are compositionally biased toward basic and acidic residues; sequence VEEEVCESER.

This sequence belongs to the DNA polymerase type-B family.

Its subcellular location is the host nucleus. It carries out the reaction DNA(n) + a 2'-deoxyribonucleoside 5'-triphosphate = DNA(n+1) + diphosphate. This Tupaia belangeri (Common tree shrew) protein is DNA polymerase catalytic subunit (DPOL).